The primary structure comprises 85 residues: uncharacterized protein (85 aa).

This is an uncharacterized protein from Caenorhabditis elegans.